Reading from the N-terminus, the 452-residue chain is Exodeoxyribonuclease 7 large subunit (452 aa).

It belongs to the XseA family. In terms of assembly, heterooligomer composed of large and small subunits.

The protein resides in the cytoplasm. It carries out the reaction Exonucleolytic cleavage in either 5'- to 3'- or 3'- to 5'-direction to yield nucleoside 5'-phosphates.. Bidirectionally degrades single-stranded DNA into large acid-insoluble oligonucleotides, which are then degraded further into small acid-soluble oligonucleotides. This Lysinibacillus sphaericus (strain C3-41) protein is Exodeoxyribonuclease 7 large subunit.